A 109-amino-acid chain; its full sequence is U4-lycotoxin-Ls1a (109 aa).

Positions 1–22 are cleaved as a signal peptide; the sequence is MKVLVLFSVLFLTLFSYSSTEA. A propeptide spanning residues 23–44 is cleaved from the precursor; the sequence is IDEFDSDAEDDMLSLMANEQVR. The segment at 45–88 is knottin domain; it reads AKACTPRLHDCSHDRHSCCRGELFKDVCYCFYPEGEDKTEVCSC. Cystine bridges form between cysteine 48-cysteine 63, cysteine 55-cysteine 72, cysteine 62-cysteine 88, and cysteine 74-cysteine 86. The linear cationic cytotoxin domain stretch occupies residues 89–108; that stretch reads QQPKSHKYIEKVVDKAKTVV.

Belongs to the neurotoxin 19 (CSTX) family. 05 (U4-Lctx) subfamily. Expressed by the venom gland.

The protein resides in the secreted. Functionally, enhances the high-affinity desensitization of human P2RX3 purinoceptors. This chain is U4-lycotoxin-Ls1a, found in Lycosa singoriensis (Wolf spider).